The following is a 120-amino-acid chain: Small ribosomal subunit protein uS13 (120 aa).

Residues 93 to 120 (RRGLPCRGQKTKTNARTRKGKRKTVGAA) are disordered.

Belongs to the universal ribosomal protein uS13 family. Part of the 30S ribosomal subunit. Forms a loose heterodimer with protein S19. Forms two bridges to the 50S subunit in the 70S ribosome.

Located at the top of the head of the 30S subunit, it contacts several helices of the 16S rRNA. In the 70S ribosome it contacts the 23S rRNA (bridge B1a) and protein L5 of the 50S subunit (bridge B1b), connecting the 2 subunits; these bridges are implicated in subunit movement. Contacts the tRNAs in the A and P-sites. In Sulfurovum sp. (strain NBC37-1), this protein is Small ribosomal subunit protein uS13.